Consider the following 450-residue polypeptide: MAQFFKAKPNSSKQLSAKLSLSVNQLDHLGAGIAQHQGKVVFIPGALPDETVTVQFTEQKKNYARAKLIKVDTPSSERVEPECPHYHTCGGCDLQHMSLSGQREHKEAALLDIMAKFAGAEGGTLSPELTGEGWHYRRRARLATLFDKNTKHLSLGFRAASSSNVVPISQCQVLAKPLSDLIVPFAKLLNQLTAKASLGHLELIAADNGHFAVLRITKALNDKDLAKLSAFAEQHQIHICLQDNEGQFQGVGAELVLPVYQLLDDKAESDAVSLSFTPGNFVQVNGQINKAMVAQAMDWLAPALDERILDLFCGMGNFSLPLAKMGADVIGVEGVAEMVTQARVNAKANNLDKLTFFHGDLSADLSLEPWMGKIDKLLLDPARAGAFESLQWLKKMKPRKVVYVSCNPASLARDSAVLLERGYRLQQLGLIDMFPQTHHIEAMALFELTK.

One can recognise a TRAM domain in the interval 12–70 (SKQLSAKLSLSVNQLDHLGAGIAQHQGKVVFIPGALPDETVTVQFTEQKKNYARAKLIK). [4Fe-4S] cluster contacts are provided by cysteine 83, cysteine 89, cysteine 92, and cysteine 171. Residues glutamine 283, phenylalanine 312, asparagine 317, glutamate 333, aspartate 360, and aspartate 380 each contribute to the S-adenosyl-L-methionine site. Cysteine 406 serves as the catalytic Nucleophile.

Belongs to the class I-like SAM-binding methyltransferase superfamily. RNA M5U methyltransferase family. RlmD subfamily.

It catalyses the reaction uridine(1939) in 23S rRNA + S-adenosyl-L-methionine = 5-methyluridine(1939) in 23S rRNA + S-adenosyl-L-homocysteine + H(+). Catalyzes the formation of 5-methyl-uridine at position 1939 (m5U1939) in 23S rRNA. The protein is 23S rRNA (uracil(1939)-C(5))-methyltransferase RlmD of Shewanella baltica (strain OS155 / ATCC BAA-1091).